The following is a 188-amino-acid chain: A-type ATP synthase subunit E (188 aa).

This sequence belongs to the V-ATPase E subunit family. In terms of assembly, has multiple subunits with at least A(3), B(3), C, D, E, F, H, I and proteolipid K(x).

The protein resides in the cell membrane. In terms of biological role, component of the A-type ATP synthase that produces ATP from ADP in the presence of a proton gradient across the membrane. In Archaeoglobus fulgidus (strain ATCC 49558 / DSM 4304 / JCM 9628 / NBRC 100126 / VC-16), this protein is A-type ATP synthase subunit E.